The chain runs to 84 residues: UPF0153 protein PA1578.1 (84 aa).

It belongs to the UPF0153 family.

This chain is UPF0153 protein PA1578.1, found in Pseudomonas aeruginosa (strain ATCC 15692 / DSM 22644 / CIP 104116 / JCM 14847 / LMG 12228 / 1C / PRS 101 / PAO1).